The chain runs to 86 residues: Diphthamide biosynthesis protein 3 (86 aa).

The region spanning Tyr4 to Asp60 is the DPH-type MB domain. Residues Cys26, Cys28, Cys48, and Cys51 each coordinate Fe cation.

The protein belongs to the DPH3 family. Component of the 2-(3-amino-3-carboxypropyl)histidine synthase complex composed of Dph1, Dph2, Dph3 and a NADH-dependent reductase. Fe(2+) serves as cofactor.

It catalyses the reaction [3Fe-4S](1+)-[protein] + Fe(2+)-[Dph3] = [3Fe-4S](0)-[protein] + Fe(3+)-[Dph3]. It carries out the reaction 2 [3Fe-4S](0)-[protein] + 2 Fe(2+)-[Dph3] + NADH = 2 [4Fe-4S](1+)-[protein] + 2 [Dph3] + NAD(+) + H(+). Its pathway is protein modification; peptidyl-diphthamide biosynthesis. In terms of biological role, required for the first step of diphthamide biosynthesis, a post-translational modification of histidine which occurs in elongation factor 2. Dph1 and Dph2 transfer a 3-amino-3-carboxypropyl (ACP) group from S-adenosyl-L-methionine (SAM) to a histidine residue, the reaction is assisted by a reduction system comprising Dph3 and a NADH-dependent reductase. Acts as an electron donor to reduce the Fe-S cluster in Dph1-Dph2 keeping the [4Fe-4S] clusters in the active and reduced state. Restores iron to Dph1-Dph2 iron-sulfur clusters which have degraded from [4Fe-4S] to [3Fe-4S] by donating an iron atom to reform [4Fe-4S] clusters, in a manner dependent on the presence of elongation factor 2 and SAM. Associates with the elongator complex and is required for tRNA Wobble base modifications mediated by the elongator complex. The elongator complex is required for multiple tRNA modifications, including mcm5U (5-methoxycarbonylmethyl uridine), mcm5s 2U (5-methoxycarbonylmethyl-2-thiouridine), and ncm5U (5-carbamoylmethyl uridine). The polypeptide is Diphthamide biosynthesis protein 3 (Drosophila melanogaster (Fruit fly)).